We begin with the raw amino-acid sequence, 426 residues long: Probable auxin efflux carrier component 9 (426 aa).

At Met-1–Glu-6 the chain is on the extracellular side. A helical transmembrane segment spans residues Val-7–Ser-27. Over Val-28–Gln-38 the chain is Cytoplasmic. The helical transmembrane segment at Cys-39–Val-59 threads the bilayer. Val-51 is a binding site for (indol-3-yl)acetate. The Extracellular portion of the chain corresponds to Ser-60–Arg-70. The helical transmembrane segment at Leu-71–Leu-91 threads the bilayer. Over Trp-92 to Trp-114 the chain is Cytoplasmic. A helical membrane pass occupies residues Val-115–Leu-135. Residues Asn-126 and Ile-128 each coordinate (indol-3-yl)acetate. Residues Asn-136–Asp-145 are Extracellular-facing. Residues Leu-146–Tyr-166 form a helical membrane-spanning segment. Position 159 (Tyr-159) interacts with (indol-3-yl)acetate. Residues Glu-167–Ser-286 lie on the Cytoplasmic side of the membrane. The interval Arg-232–Glu-258 is disordered. The chain crosses the membrane as a helical span at residues Phe-287–Val-307. Residues Glu-308 to Ser-310 are Extracellular-facing. A helical transmembrane segment spans residues Leu-311–Ala-331. The Cytoplasmic segment spans residues Arg-332–Ser-347. Residues Met-348–Met-368 form a helical membrane-spanning segment. Topologically, residues His-369–Thr-371 are extracellular. The helical transmembrane segment at Leu-372–Ala-392 threads the bilayer. Val-386 serves as a coordination point for (indol-3-yl)acetate. The Cytoplasmic segment spans residues Glu-393–Gly-405. Residues Val-406–Leu-426 form a helical membrane-spanning segment.

This sequence belongs to the auxin efflux carrier (TC 2.A.69.1) family. Homodimer. Expressed in roots, leaves and shoot apex. Expressed in roots, stem bases, stems, leaves and young panicles.

It localises to the membrane. Functionally, may act as a component of the auxin efflux carrier. This is Probable auxin efflux carrier component 9 from Oryza sativa subsp. japonica (Rice).